Consider the following 495-residue polypeptide: Vacuolar-processing enzyme (495 aa).

The N-terminal stretch at 1 to 32 (MALDRSIISKTTWYSVVLWMMVVLVRVHGAAA) is a signal peptide. N-linked (GlcNAc...) asparagine glycosylation is present at Asn-138. Residue His-178 is part of the active site. The Nucleophile role is filled by Cys-220. A disulfide bridge connects residues Cys-253 and Cys-267. 2 N-linked (GlcNAc...) asparagine glycosylation sites follow: Asn-320 and Asn-376. Intrachain disulfides connect Cys-431–Cys-461 and Cys-443–Cys-478.

It belongs to the peptidase C13 family.

Asparagine-specific endopeptidase involved in the processing of vacuolar seed protein precursors into the mature forms. The protein is Vacuolar-processing enzyme of Glycine max (Soybean).